Reading from the N-terminus, the 328-residue chain is 3-ketodihydrosphingosine reductase TSC10 (328 aa).

Leu-16 contributes to the NADP(+) binding site. The NADPH site is built by Gly-19, Ser-21, and Gly-23. A GXSXG motif is present at residues 19 to 23 (GASQG). NADP(+) is bound at residue Leu-24. NADPH-binding residues include Arg-44, Lys-48, and Asp-73. Asp-73 serves as a coordination point for NADP(+). Ser-161 acts as the Proton donor in catalysis. NADP(+) contacts are provided by Tyr-175, Lys-179, and Ser-210. Tyr-175 functions as the Proton acceptor in the catalytic mechanism. Lys-179 (lowers pKa of active site Tyr) is an active-site residue. Residues 277–297 (FFQVIVSFIFSIIAPIANYVV) form a helical membrane-spanning segment.

Belongs to the short-chain dehydrogenases/reductases (SDR) family.

It localises to the endoplasmic reticulum membrane. It catalyses the reaction sphinganine + NADP(+) = 3-oxosphinganine + NADPH + H(+). It functions in the pathway lipid metabolism; sphingolipid metabolism. In terms of biological role, catalyzes the reduction of 3'-oxosphinganine (3-ketodihydrosphingosine/KDS) to sphinganine (dihydrosphingosine/DHS), the second step of de novo sphingolipid biosynthesis. The chain is 3-ketodihydrosphingosine reductase TSC10 (TSC10) from Debaryomyces hansenii (strain ATCC 36239 / CBS 767 / BCRC 21394 / JCM 1990 / NBRC 0083 / IGC 2968) (Yeast).